Consider the following 275-residue polypeptide: 18S rRNA (guanine(1575)-N(7))-methyltransferase (275 aa).

A disordered region spans residues 256 to 275 (RGRKVAKDSKFTGRKRRHRF). The Nuclear localization signal signature appears at 257–264 (GRKVAKDS).

It belongs to the class I-like SAM-binding methyltransferase superfamily. BUD23/WBSCR22 family. Interacts with TRM112. Interacts with ECM16.

Its subcellular location is the cytoplasm. It is found in the nucleus. It catalyses the reaction guanosine(1575) in yeast 18S rRNA + S-adenosyl-L-methionine = N(7)-methylguanosine(1575) in yeast 18S rRNA + S-adenosyl-L-homocysteine. Functionally, S-adenosyl-L-methionine-dependent methyltransferase that specifically methylates the N(7) position of guanine 1575 (m7G1575) in 18S rRNA. Requires the methyltransferase adapter protein TRM112 for full rRNA methyltransferase activity. Important for biogenesis end export of the 40S ribosomal subunit independent on its methyltransferase activity. Required for efficient cleavage of the primary 35S precursor rRNA at site A2. Involved in positioning the proximal bud pole signal. This chain is 18S rRNA (guanine(1575)-N(7))-methyltransferase (BUD23), found in Saccharomyces cerevisiae (strain ATCC 204508 / S288c) (Baker's yeast).